The primary structure comprises 312 residues: tRNA-dihydrouridine(16) synthase (312 aa).

Residues 7 to 9 (PME) and Gln68 contribute to the FMN site. The Proton donor role is filled by Cys98. FMN is bound by residues Lys139, 200–202 (NGE), and 224–225 (GR).

It belongs to the Dus family. DusC subfamily. The cofactor is FMN.

The catalysed reaction is 5,6-dihydrouridine(16) in tRNA + NADP(+) = uridine(16) in tRNA + NADPH + H(+). It carries out the reaction 5,6-dihydrouridine(16) in tRNA + NAD(+) = uridine(16) in tRNA + NADH + H(+). Functionally, catalyzes the synthesis of 5,6-dihydrouridine (D), a modified base found in the D-loop of most tRNAs, via the reduction of the C5-C6 double bond in target uridines. Specifically modifies U16 in tRNAs. This chain is tRNA-dihydrouridine(16) synthase, found in Salmonella typhimurium (strain LT2 / SGSC1412 / ATCC 700720).